Here is a 982-residue protein sequence, read N- to C-terminus: Cell division cycle-associated protein 2 (982 aa).

Residues 75–87 (VKTSSGKSTSSLQ) show a composition bias toward polar residues. Positions 75-97 (VKTSSGKSTSSLQKARRRSTVGV) are disordered. Ser-100, Ser-122, and Ser-133 each carry phosphoserine. 2 disordered regions span residues 192-216 (SGFP…NYLS) and 274-315 (TPLS…CGSS). Polar residues-rich tracts occupy residues 207-216 (SQDSPDNYLS) and 275-315 (PLSS…CGSS). Ser-286, Ser-296, and Ser-306 each carry phosphoserine. Thr-309 is modified (phosphothreonine). Positions 379-436 (KRKRVTFGEDLSPEVFDESLPANTPLCKGGTPVRPRTVKTTSPLQSPVHEQFLQPNFD) constitute a PP1-binding domain. Ser-390 and Ser-397 each carry phosphoserine. 4 disordered regions span residues 400–473 (ANTP…NTCS), 489–545 (TRTS…KSYR), 568–638 (KPLL…QSQV), and 651–716 (ASER…PQSQ). Position 402 is a phosphothreonine (Thr-402). Ser-424 is modified (phosphoserine). 2 stretches are compositionally biased toward polar residues: residues 451–473 (SFAN…NTCS) and 498–512 (TLSS…TTQA). Basic residues predominate over residues 518 to 545 (KMSRRKSREKKHTSAALPKKKQVLKSYR). Phosphoserine is present on residues Ser-572 and Ser-595. Residues 651–668 (ASERGPNASTRDTGSEGN) show a composition bias toward polar residues. Residues 669 to 685 (TRAESKCQSAKEPKPGT) are compositionally biased toward basic and acidic residues. Ser-735 bears the Phosphoserine mark. Lys-741 participates in a covalent cross-link: Glycyl lysine isopeptide (Lys-Gly) (interchain with G-Cter in SUMO2). The interval 910–982 (ECPSSKEETI…SLKGESAQLP (73 aa)) is disordered. Phosphoserine is present on Ser-913. The segment covering 931–942 (VSGSESQGVGSS) has biased composition (low complexity). Phosphoserine is present on Ser-950. Residues 952–964 (CGSTLTDANSATQ) are compositionally biased toward polar residues. A Phosphoserine modification is found at Ser-973.

Interacts with PPP1CC. In terms of processing, phosphorylated by CDK1. May regulate its subcellular location.

The protein resides in the nucleus. Its function is as follows. Regulator of chromosome structure during mitosis required for condensin-depleted chromosomes to retain their compact architecture through anaphase. Acts by mediating the recruitment of phopsphatase PP1-gamma subunit (PPP1CC) to chromatin at anaphase and into the following interphase. At anaphase onset, its association with chromatin targets a pool of PPP1CC to dephosphorylate substrates. This is Cell division cycle-associated protein 2 (Cdca2) from Mus musculus (Mouse).